Consider the following 527-residue polypeptide: Hopanoid C-2 methylase (527 aa).

A B12-binding domain is found at 36–148; the sequence is VAAFMPPQGL…AKLTHDVTRP (113 aa). The 236-residue stretch at 173 to 408 folds into the Radical SAM core domain; it reads AECSKYLLGS…HDQVVAMWKD (236 aa). Residues cysteine 189, cysteine 193, and cysteine 196 each coordinate [4Fe-4S] cluster.

The protein belongs to the radical SAM superfamily. The cofactor is [4Fe-4S] cluster.

Functionally, required for methylation of hopanoids at the C-2 position. This chain is Hopanoid C-2 methylase, found in Rhodopseudomonas palustris (strain TIE-1).